Reading from the N-terminus, the 572-residue chain is Urease subunit alpha (572 aa).

Ni(2+) is bound by residues His139, His141, and Lys222. At Lys222 the chain carries N6-carboxylysine. His224 is a binding site for substrate. Ni(2+)-binding residues include His251 and His277. His325 serves as the catalytic Proton donor. Residue Asp365 participates in Ni(2+) binding.

It belongs to the metallo-dependent hydrolases superfamily. Urease alpha subunit family. As to quaternary structure, heterotrimer of UreA (gamma), UreB (beta) and UreC (alpha) subunits. Three heterotrimers associate to form the active enzyme. The cofactor is Ni cation. Carboxylation allows a single lysine to coordinate two nickel ions.

It is found in the cytoplasm. It catalyses the reaction urea + 2 H2O + H(+) = hydrogencarbonate + 2 NH4(+). Its pathway is nitrogen metabolism; urea degradation; CO(2) and NH(3) from urea (urease route): step 1/1. The sequence is that of Urease subunit alpha from Acetivibrio thermocellus (strain ATCC 27405 / DSM 1237 / JCM 9322 / NBRC 103400 / NCIMB 10682 / NRRL B-4536 / VPI 7372) (Clostridium thermocellum).